A 107-amino-acid polypeptide reads, in one-letter code: Large ribosomal subunit protein bL21 (107 aa).

It belongs to the bacterial ribosomal protein bL21 family. Part of the 50S ribosomal subunit. Contacts protein L20.

Functionally, this protein binds to 23S rRNA in the presence of protein L20. This chain is Large ribosomal subunit protein bL21, found in Buchnera aphidicola subsp. Schizaphis graminum (strain Sg).